The sequence spans 93 residues: Alpha-defensin 2 (93 aa).

The signal sequence occupies residues 1 to 19 (MKPLVLLSALVLLSFQVQA). Positions 20 to 58 (DPIQNTDEETKTEEQSGEEDQAVSVSFGDREGASLQEES) are excised as a propeptide. The disordered stretch occupies residues 23–49 (QNTDEETKTEEQSGEEDQAVSVSFGDR). Intrachain disulfides connect Cys-64/Cys-92, Cys-66/Cys-81, and Cys-71/Cys-91.

The protein belongs to the alpha-defensin family. As to expression, paneth cells of the small bowel.

It localises to the secreted. Functionally, has broad-spectrum antimicrobial properties. Has antibacterial activity against the Gram-positive bacterium L.monocytogenes EGD and the Gram-negative bacteria E.coli ML-35p and avirulent S.typhimurium 7953, but not against the mouse-virulent S.typhimurium 14028S. Probably contributes to the antimicrobial barrier function of the small bowel mucosa. The chain is Alpha-defensin 2 (Defa2) from Mus musculus (Mouse).